The primary structure comprises 64 residues: Large ribosomal subunit protein bL35 (64 aa).

Positions 1-14 are enriched in basic residues; sequence MKNKTHKGTAKRVK. The tract at residues 1–29 is disordered; it reads MKNKTHKGTAKRVKVTGSGKLVREQANRR.

This sequence belongs to the bacterial ribosomal protein bL35 family.

This Corynebacterium glutamicum (strain R) protein is Large ribosomal subunit protein bL35.